The chain runs to 210 residues: MVESVVKNWQGEQIGQKTFELRVAKETTAAHIVHRALVRQQTNARQGTASTKTRAEVRGGGRKPWRQKGTGRARAGSIRSPLWRGGGVIFGPKPRDFDLKMNRKERRLALRTAFVSRIDDLILVEEFSNELSRPKTKDLVAAFTRWGAEPESKILLILSEFPENVYLSARNIENLKLIAADQLNVYDLLHADKIVVTTSALEKIQEVYNG.

Positions 41–52 are enriched in polar residues; that stretch reads QTNARQGTASTK. Positions 41 to 71 are disordered; it reads QTNARQGTASTKTRAEVRGGGRKPWRQKGTG. Residues 60 to 71 show a composition bias toward basic residues; sequence GGRKPWRQKGTG.

The protein belongs to the universal ribosomal protein uL4 family. Part of the 50S ribosomal subunit.

One of the primary rRNA binding proteins, this protein initially binds near the 5'-end of the 23S rRNA. It is important during the early stages of 50S assembly. It makes multiple contacts with different domains of the 23S rRNA in the assembled 50S subunit and ribosome. Functionally, forms part of the polypeptide exit tunnel. The sequence is that of Large ribosomal subunit protein uL4 from Nostoc sp. (strain PCC 7120 / SAG 25.82 / UTEX 2576).